The primary structure comprises 890 residues: UPF0182 protein SYNW1212 (890 aa).

The next 8 membrane-spanning stretches (helical) occupy residues 21 to 41, 64 to 84, 98 to 118, 134 to 154, 173 to 193, 219 to 239, 268 to 288, and 295 to 315; these read WLLQ…AIRW, LTLL…NGLI, WQVS…LVAV, AVVL…SIPL, FAAL…CLGN, RLLM…CWLS, LLTV…SLLL, and VLAV…WLIL.

Belongs to the UPF0182 family.

The protein localises to the cell membrane. The polypeptide is UPF0182 protein SYNW1212 (Parasynechococcus marenigrum (strain WH8102)).